We begin with the raw amino-acid sequence, 494 residues long: Fumarate hydratase, mitochondrial (494 aa).

A mitochondrion-targeting transit peptide spans 1-15; the sequence is MLRASATRFLSQAKN. Substrate-binding positions include 128 to 130, 159 to 162, 169 to 171, and T217; these read SGT, HPND, and SSN. The Proton donor/acceptor role is filled by H218. The active site involves S348. Substrate is bound by residues S349 and 354–356; that span reads KVN.

Belongs to the class-II fumarase/aspartase family. Fumarase subfamily. Homotetramer.

The protein localises to the mitochondrion matrix. Its subcellular location is the cytoplasm. It localises to the nucleus. It catalyses the reaction (S)-malate = fumarate + H2O. Its pathway is carbohydrate metabolism; tricarboxylic acid cycle; (S)-malate from fumarate: step 1/1. Functionally, catalyzes the reversible stereospecific interconversion of fumarate to L-malate. In mitochondrion, catalyzes the hydration of fumarate to L-malate in the tricarboxylic acid (TCA) cycle to facilitate a transition step in the production of energy in the form of NADH. In cytoplasm and nucleus, involved in DNA repair in response to DNA damage: following DNA double-strand breaks (DSBs), translocates from the cytosol to the nucleus and promotes DNA repair by catalyzing the dehydration of L-malate to fumarate. The sequence is that of Fumarate hydratase, mitochondrial from Rhizopus oryzae (Mucormycosis agent).